The primary structure comprises 379 residues: UDP-4-amino-4-deoxy-L-arabinose--oxoglutarate aminotransferase (379 aa).

K182 is subject to N6-(pyridoxal phosphate)lysine.

Belongs to the DegT/DnrJ/EryC1 family. ArnB subfamily. As to quaternary structure, homodimer. The cofactor is pyridoxal 5'-phosphate.

The catalysed reaction is UDP-4-amino-4-deoxy-beta-L-arabinose + 2-oxoglutarate = UDP-beta-L-threo-pentopyranos-4-ulose + L-glutamate. It participates in nucleotide-sugar biosynthesis; UDP-4-deoxy-4-formamido-beta-L-arabinose biosynthesis; UDP-4-deoxy-4-formamido-beta-L-arabinose from UDP-alpha-D-glucuronate: step 2/3. Its pathway is bacterial outer membrane biogenesis; lipopolysaccharide biosynthesis. In terms of biological role, catalyzes the conversion of UDP-4-keto-arabinose (UDP-Ara4O) to UDP-4-amino-4-deoxy-L-arabinose (UDP-L-Ara4N). The modified arabinose is attached to lipid A and is required for resistance to polymyxin and cationic antimicrobial peptides. This is UDP-4-amino-4-deoxy-L-arabinose--oxoglutarate aminotransferase from Shigella boydii serotype 4 (strain Sb227).